A 308-amino-acid chain; its full sequence is Oxygen-dependent coproporphyrinogen-III oxidase (308 aa).

Serine 94 serves as a coordination point for substrate. 2 residues coordinate a divalent metal cation: histidine 98 and histidine 108. The Proton donor role is filled by histidine 108. Residue 110–112 (NVR) participates in substrate binding. Histidine 147 and histidine 177 together coordinate a divalent metal cation. The important for dimerization stretch occupies residues 242 to 277 (YVEFNLVWDRGTLFGLQTGGRTESILMSMPPLVRWE). Residue 260-262 (GGR) coordinates substrate.

This sequence belongs to the aerobic coproporphyrinogen-III oxidase family. Homodimer. It depends on a divalent metal cation as a cofactor.

It localises to the cytoplasm. It catalyses the reaction coproporphyrinogen III + O2 + 2 H(+) = protoporphyrinogen IX + 2 CO2 + 2 H2O. It participates in porphyrin-containing compound metabolism; protoporphyrin-IX biosynthesis; protoporphyrinogen-IX from coproporphyrinogen-III (O2 route): step 1/1. Functionally, involved in the heme biosynthesis. Catalyzes the aerobic oxidative decarboxylation of propionate groups of rings A and B of coproporphyrinogen-III to yield the vinyl groups in protoporphyrinogen-IX. The sequence is that of Oxygen-dependent coproporphyrinogen-III oxidase from Yersinia enterocolitica serotype O:8 / biotype 1B (strain NCTC 13174 / 8081).